The primary structure comprises 2282 residues: Cation channel sperm-associated targeting subunit tau (2282 aa).

Residues 1-118 (MELPPPGNRR…RGKGKGTGTR (118 aa)) are disordered. Composition is skewed to polar residues over residues 11-41 (VSIN…SLKR) and 50-87 (MMSN…NLSS). Residues 90-109 (YADEEGKPLTDKNKDKDKGR) are compositionally biased toward basic and acidic residues. Residues 131-266 (QSDEMAIANQ…IQKGCFTEVM (136 aa)) form the C2 domain. 10 disordered regions span residues 397–416 (MTKR…SSAL), 656–679 (EHED…TWAE), 747–1066 (NKLI…SHDP), 1104–1153 (SAKS…DKQS), 1217–1240 (YTND…TDDR), 1426–1445 (NSLL…DSRS), 1452–1515 (RQNT…SLDK), 1542–1569 (ERRQ…LEKT), 1908–1928 (NQAN…LKKQ), and 2187–2222 (PKKS…EPNK). Polar residues-rich tracts occupy residues 750 to 760 (ITDSSFNTTKP), 783 to 792 (SDPSSNTTKP), 800 to 841 (DPSS…SDLN), 849 to 858 (IVSTISSDPN), and 953 to 974 (SARS…TKLS). The segment covering 1104 to 1123 (SAKSLDSNNSSASSSPTVNS) has biased composition (low complexity). Residues 1124 to 1136 (DTTTNAAEPSGTK) are compositionally biased toward polar residues. Polar residues-rich tracts occupy residues 1452–1466 (RQNT…SSVS) and 1473–1482 (DCQSISTQES). The segment covering 1484 to 1493 (YPVRDTKSDS) has biased composition (basic and acidic residues). Positions 1495 to 1504 (NDTEEMELDS) are enriched in acidic residues. Composition is skewed to basic and acidic residues over residues 1542-1555 (ERRQ…ESLI) and 1916-1925 (SPERPSDISL).

In terms of assembly, component of the CatSper complex or CatSpermasome composed of the core pore-forming members CATSPER1, CATSPER2, CATSPER3 and CATSPER4 as well as auxiliary members CATSPERB, CATSPERG, CATSPERD, CATSPERE, CATSPERZ, C2CD6/CATSPERT, SLCO6C1, TMEM249, TMEM262 and EFCAB9. HSPA1 may be an additional auxiliary complex member. The core complex members CATSPER1, CATSPER2, CATSPER3 and CATSPER4 form a heterotetrameric channel. The auxiliary CATSPERB, CATSPERG, CATSPERD and CATSPERE subunits form a pavilion-like structure over the pore which stabilizes the complex through interactions with CATSPER4, CATSPER3, CATSPER1 and CATSPER2 respectively. SLCO6C1 interacts with CATSPERE and TMEM262/CATSPERH interacts with CATSPERB, further stabilizing the complex. C2CD6/CATSPERT interacts at least with CATSPERD and is required for targeting the CatSper complex in the flagellar membrane. Expressed in cauda sperm (at protein level).

The protein localises to the cell projection. Its subcellular location is the cilium. It is found in the flagellum membrane. Functionally, auxiliary component of the CatSper complex, a complex involved in sperm cell hyperactivation. Sperm cell hyperactivation is needed for sperm motility which is essential late in the preparation of sperm for fertilization. Required for CatSper complex targeting and trafficking into the quadrilinear nanodomains. Targets the preassembled CatSper complexes to elongating flagella, where it links the channel-carrying vesicles and motor proteins. This is Cation channel sperm-associated targeting subunit tau from Mus musculus (Mouse).